Consider the following 1029-residue polypeptide: Chitin synthase 2 (1029 aa).

Disordered stretches follow at residues 1-160 (MDRP…GARS), 174-216 (SDVD…SHLR), and 234-257 (AHYGPAPAEGDQQRRGVREPQKSR). Residues 61 to 77 (PSVSSIHSRPSSISNIP) show a composition bias toward low complexity. Residues 244–257 (DQQRRGVREPQKSR) are compositionally biased toward basic and acidic residues. The N-linked (GlcNAc...) asparagine glycan is linked to N348. 8 helical membrane passes run 639–659 (WLNGAFFAAIYSLVHFRQLWA), 681–701 (VLFTFFSLANFYLTFYFVAGG), 716–736 (LYIFTILRYTLILLICAQFIL), 752–772 (SMVIYGIVMVYTTFAAFYIVI), 791–811 (NLIVSMASTIGLYFLMSFIYL), 820–840 (SIQYFMLLPSYLCTLQVYAFC), 918–938 (YMVVSWMIANGILGMAVSEIY), and 952–972 (ILWSVASLALFRALGSTTFAI).

Belongs to the chitin synthase family. Class II subfamily.

Its subcellular location is the cell membrane. It carries out the reaction [(1-&gt;4)-N-acetyl-beta-D-glucosaminyl](n) + UDP-N-acetyl-alpha-D-glucosamine = [(1-&gt;4)-N-acetyl-beta-D-glucosaminyl](n+1) + UDP + H(+). Its function is as follows. Polymerizes chitin, a structural polymer of the cell wall and septum, by transferring the sugar moiety of UDP-GlcNAc to the non-reducing end of the growing chitin polymer. Plays an important role in cell wall integrity and has distinct functions in invasive hyphae and vegetative hyphae, but is not involved in plant infection. The sequence is that of Chitin synthase 2 from Pyricularia oryzae (strain 70-15 / ATCC MYA-4617 / FGSC 8958) (Rice blast fungus).